The chain runs to 386 residues: Dual-specificity RNA methyltransferase RlmN (386 aa).

The Proton acceptor role is filled by Glu94. Residues 100–341 (EENRGTLCIS…VTTIRKTRGD (242 aa)) enclose the Radical SAM core domain. An intrachain disulfide couples Cys107 to Cys347. The [4Fe-4S] cluster site is built by Cys114, Cys118, and Cys121. Residues 173–174 (GE), Ser205, 227–229 (SLH), and Asn304 each bind S-adenosyl-L-methionine. The active-site S-methylcysteine intermediate is the Cys347.

This sequence belongs to the radical SAM superfamily. RlmN family. Requires [4Fe-4S] cluster as cofactor.

Its subcellular location is the cytoplasm. It catalyses the reaction adenosine(2503) in 23S rRNA + 2 reduced [2Fe-2S]-[ferredoxin] + 2 S-adenosyl-L-methionine = 2-methyladenosine(2503) in 23S rRNA + 5'-deoxyadenosine + L-methionine + 2 oxidized [2Fe-2S]-[ferredoxin] + S-adenosyl-L-homocysteine. The catalysed reaction is adenosine(37) in tRNA + 2 reduced [2Fe-2S]-[ferredoxin] + 2 S-adenosyl-L-methionine = 2-methyladenosine(37) in tRNA + 5'-deoxyadenosine + L-methionine + 2 oxidized [2Fe-2S]-[ferredoxin] + S-adenosyl-L-homocysteine. Functionally, specifically methylates position 2 of adenine 2503 in 23S rRNA and position 2 of adenine 37 in tRNAs. m2A2503 modification seems to play a crucial role in the proofreading step occurring at the peptidyl transferase center and thus would serve to optimize ribosomal fidelity. This is Dual-specificity RNA methyltransferase RlmN from Herminiimonas arsenicoxydans.